The sequence spans 372 residues: Glutamate 5-kinase (372 aa).

Lys-14 lines the ATP pocket. Positions 54, 141, and 153 each coordinate substrate. 173–174 is a binding site for ATP; sequence TD. The 79-residue stretch at 280–358 folds into the PUA domain; sequence RGTLVLDAGA…DAIESILGYS (79 aa).

This sequence belongs to the glutamate 5-kinase family.

It is found in the cytoplasm. It catalyses the reaction L-glutamate + ATP = L-glutamyl 5-phosphate + ADP. The protein operates within amino-acid biosynthesis; L-proline biosynthesis; L-glutamate 5-semialdehyde from L-glutamate: step 1/2. In terms of biological role, catalyzes the transfer of a phosphate group to glutamate to form L-glutamate 5-phosphate. In Pseudomonas putida (strain GB-1), this protein is Glutamate 5-kinase.